The chain runs to 396 residues: Small ribosomal subunit protein mS27 (396 aa).

The protein belongs to the mitochondrion-specific ribosomal protein mS27 family. In terms of assembly, component of the mitochondrial small ribosomal subunit (mt-SSU). Mature N.crassa 74S mitochondrial ribosomes consist of a small (37S) and a large (54S) subunit. The 37S small subunit contains a 16S ribosomal RNA (16S mt-rRNA) and 32 different proteins. The 54S large subunit contains a 23S rRNA (23S mt-rRNA) and 42 different proteins.

Its subcellular location is the mitochondrion. In terms of biological role, component of the mitochondrial ribosome (mitoribosome), a dedicated translation machinery responsible for the synthesis of mitochondrial genome-encoded proteins, including at least some of the essential transmembrane subunits of the mitochondrial respiratory chain. The mitoribosomes are attached to the mitochondrial inner membrane and translation products are cotranslationally integrated into the membrane. This is Small ribosomal subunit protein mS27 (mrp13) from Neurospora crassa (strain ATCC 24698 / 74-OR23-1A / CBS 708.71 / DSM 1257 / FGSC 987).